The chain runs to 485 residues: MHRKTLAELAAGLERREFSSVELTQAHLARIERLDPALNSFITTTPEIALAQARAADERLAKGEAGPLTGIPIAQKDIFCTKGVRTSCGSRMLDSFVSPYDACVVERFNAAGAVMLGKLNMDEFAMGSSNETSYYGPVKNPWNTATVPGGSSGGSAAAVAARLVPGATGTDTGGSIRQPAAFCGITGLKPTYGRVSRWGMIAFASSLDQAGPMARTAEDCAIMLQIMAGFDERDSTCVDRPVPDYRAALGNDLDGLRIGLPKEFFGEGLDPAIAGLIHAAVDEYRRLGAIVREISLPNMHLSVPAYYVVAPAECSSNLARFDGVRFGHRCENPTDLADLYTRSRGEGFGAEVKRRILIGTYALSAGYYDAYYLKAQKIRRLISEDFRRAFEEVDVIMGPTAPSVAFEFGAKSADPIAMYLSDIYTIAVNLAGLPGMSIPVGFSNGLPVGMQIIGGYFSEDRLLNVAHRYQQATDWHTRTPAGIAD.

Residues Lys-76 and Ser-151 each act as charge relay system in the active site. Ser-175 (acyl-ester intermediate) is an active-site residue.

This sequence belongs to the amidase family. GatA subfamily. In terms of assembly, heterotrimer of A, B and C subunits.

The catalysed reaction is L-glutamyl-tRNA(Gln) + L-glutamine + ATP + H2O = L-glutaminyl-tRNA(Gln) + L-glutamate + ADP + phosphate + H(+). In terms of biological role, allows the formation of correctly charged Gln-tRNA(Gln) through the transamidation of misacylated Glu-tRNA(Gln) in organisms which lack glutaminyl-tRNA synthetase. The reaction takes place in the presence of glutamine and ATP through an activated gamma-phospho-Glu-tRNA(Gln). The protein is Glutamyl-tRNA(Gln) amidotransferase subunit A of Methylococcus capsulatus (strain ATCC 33009 / NCIMB 11132 / Bath).